The primary structure comprises 178 residues: Large ribosomal subunit protein uL5 (178 aa).

This sequence belongs to the universal ribosomal protein uL5 family. In terms of assembly, part of the 50S ribosomal subunit; part of the 5S rRNA/L5/L18/L25 subcomplex. Contacts the 5S rRNA and the P site tRNA. Forms a bridge to the 30S subunit in the 70S ribosome.

In terms of biological role, this is one of the proteins that bind and probably mediate the attachment of the 5S RNA into the large ribosomal subunit, where it forms part of the central protuberance. In the 70S ribosome it contacts protein S13 of the 30S subunit (bridge B1b), connecting the 2 subunits; this bridge is implicated in subunit movement. Contacts the P site tRNA; the 5S rRNA and some of its associated proteins might help stabilize positioning of ribosome-bound tRNAs. The protein is Large ribosomal subunit protein uL5 of Aliivibrio fischeri (strain ATCC 700601 / ES114) (Vibrio fischeri).